Here is a 76-residue protein sequence, read N- to C-terminus: Exodeoxyribonuclease 7 small subunit (76 aa).

Belongs to the XseB family. Heterooligomer composed of large and small subunits.

The protein resides in the cytoplasm. The catalysed reaction is Exonucleolytic cleavage in either 5'- to 3'- or 3'- to 5'-direction to yield nucleoside 5'-phosphates.. In terms of biological role, bidirectionally degrades single-stranded DNA into large acid-insoluble oligonucleotides, which are then degraded further into small acid-soluble oligonucleotides. The chain is Exodeoxyribonuclease 7 small subunit from Enterococcus faecalis (strain ATCC 700802 / V583).